Reading from the N-terminus, the 172-residue chain is Probable tryptophan transport protein (172 aa).

A run of 4 helical transmembrane segments spans residues Val7 to Gly29, Val49 to Ala71, Ala104 to Val126, and Phe136 to Val158.

Belongs to the vitamin uptake transporter (VUT/ECF) (TC 2.A.88) family. TrpP subfamily.

It is found in the cell membrane. Functionally, probably involved in tryptophan uptake. The sequence is that of Probable tryptophan transport protein (trpP) from Bacillus subtilis (strain 168).